We begin with the raw amino-acid sequence, 207 residues long: Dephospho-CoA kinase (207 aa).

Residues isoleucine 10 to serine 207 form the DPCK domain. Glycine 18–alanine 23 lines the ATP pocket.

The protein belongs to the CoaE family.

Its subcellular location is the cytoplasm. The enzyme catalyses 3'-dephospho-CoA + ATP = ADP + CoA + H(+). It participates in cofactor biosynthesis; coenzyme A biosynthesis; CoA from (R)-pantothenate: step 5/5. Catalyzes the phosphorylation of the 3'-hydroxyl group of dephosphocoenzyme A to form coenzyme A. In Pseudomonas savastanoi pv. phaseolicola (strain 1448A / Race 6) (Pseudomonas syringae pv. phaseolicola (strain 1448A / Race 6)), this protein is Dephospho-CoA kinase.